The primary structure comprises 226 residues: Cytidylate kinase (226 aa).

12–20 (GPSGAGKGT) contributes to the ATP binding site.

It belongs to the cytidylate kinase family. Type 1 subfamily.

The protein localises to the cytoplasm. It carries out the reaction CMP + ATP = CDP + ADP. It catalyses the reaction dCMP + ATP = dCDP + ADP. The polypeptide is Cytidylate kinase (Colwellia psychrerythraea (strain 34H / ATCC BAA-681) (Vibrio psychroerythus)).